A 116-amino-acid chain; its full sequence is Large ribosomal subunit protein uL18 (116 aa).

It belongs to the universal ribosomal protein uL18 family. As to quaternary structure, part of the 50S ribosomal subunit; part of the 5S rRNA/L5/L18/L25 subcomplex. Contacts the 5S and 23S rRNAs.

In terms of biological role, this is one of the proteins that bind and probably mediate the attachment of the 5S RNA into the large ribosomal subunit, where it forms part of the central protuberance. The sequence is that of Large ribosomal subunit protein uL18 from Marinomonas sp. (strain MWYL1).